Here is an 87-residue protein sequence, read N- to C-terminus: uncharacterized protein (87 aa).

An N-terminal signal peptide occupies residues 1-26; sequence MMSTQHFILSLTILIIISNLHDEVNA. Cystine bridges form between cysteine 61-cysteine 75, cysteine 68-cysteine 79, and cysteine 74-cysteine 84.

It is found in the secreted. This is an uncharacterized protein from Schistosoma japonicum (Blood fluke).